The following is a 407-amino-acid chain: MLSFTSVFSFFLHALLLKTAFSYVIKRNNPVFDYTSEKVRGVNIGGWLVLENWITPQLFTQFSSMSNPPTDEWGFCEVLGADEAASQLAAHYSSFYTESDFATIASWGVNVLRIPIGYWAFNVVDGEPYVQGQEYWLDQALTWAEQYGLKVWIDLHGVPGSQNGFENSGKTGSIGWQQNDTVTRTLDIITYVANKYTQSQYASVVIGIETVNEPLGYGLDMDQLKQYDLDAYNIVNPLSSSVATIIHDAYVDLSIWDYGVVSPSSYNLVMDVHRYQLYESDECSKTLDDHLSDVCSIGDSIASSPYITVTGEWSGTLADCTIFEEGVDSSTFIGPNSGDISTWTDEYKGAVRLFIETQLDQFERGAGWIYWTAKTGGPSPTWDMGLLIEYGVFPQPFTDRQYSSYCG.

Positions 1-22 (MLSFTSVFSFFLHALLLKTAFS) are cleaved as a signal peptide. The active-site Proton donor is the glutamate 213. Residues cysteine 295 and cysteine 406 are joined by a disulfide bond. Glutamate 312 acts as the Nucleophile in catalysis.

This sequence belongs to the glycosyl hydrolase 5 (cellulase A) family.

The protein resides in the secreted. The enzyme catalyses Successive hydrolysis of beta-D-glucose units from the non-reducing ends of (1-&gt;3)-beta-D-glucans, releasing alpha-glucose.. Its function is as follows. Beta-glucanases participate in the metabolism of beta-glucan, the main structural component of the cell wall. It could also function biosynthetically as a transglycosylase. This chain is Glucan 1,3-beta-glucosidase 1 (exg1), found in Schizosaccharomyces pombe (strain 972 / ATCC 24843) (Fission yeast).